Here is a 273-residue protein sequence, read N- to C-terminus: Large ribosomal subunit protein uL2 (273 aa).

A disordered region spans residues 221-263; that stretch reads RGTAMNPVDHPHGGGEGRNFGKHPVSPWGLKTKGKKTRRNKRT. Residues 252 to 263 are compositionally biased toward basic residues; the sequence is TKGKKTRRNKRT.

This sequence belongs to the universal ribosomal protein uL2 family. In terms of assembly, part of the 50S ribosomal subunit. Forms a bridge to the 30S subunit in the 70S ribosome.

One of the primary rRNA binding proteins. Required for association of the 30S and 50S subunits to form the 70S ribosome, for tRNA binding and peptide bond formation. It has been suggested to have peptidyltransferase activity; this is somewhat controversial. Makes several contacts with the 16S rRNA in the 70S ribosome. This chain is Large ribosomal subunit protein uL2, found in Buchnera aphidicola subsp. Cinara cedri (strain Cc).